We begin with the raw amino-acid sequence, 179 residues long: Ribosome maturation factor RimM (179 aa).

Positions 95 to 174 (KDEFFYFDIL…QIFCTQDAFL (80 aa)) constitute a PRC barrel domain.

The protein belongs to the RimM family. Binds ribosomal protein uS19.

Its subcellular location is the cytoplasm. Functionally, an accessory protein needed during the final step in the assembly of 30S ribosomal subunit, possibly for assembly of the head region. Essential for efficient processing of 16S rRNA. May be needed both before and after RbfA during the maturation of 16S rRNA. It has affinity for free ribosomal 30S subunits but not for 70S ribosomes. The polypeptide is Ribosome maturation factor RimM (Campylobacter jejuni subsp. jejuni serotype O:2 (strain ATCC 700819 / NCTC 11168)).